A 234-amino-acid polypeptide reads, in one-letter code: tRNA1(Val) (adenine(37)-N6)-methyltransferase (234 aa).

The protein belongs to the methyltransferase superfamily. tRNA (adenine-N(6)-)-methyltransferase family.

Its subcellular location is the cytoplasm. The enzyme catalyses adenosine(37) in tRNA1(Val) + S-adenosyl-L-methionine = N(6)-methyladenosine(37) in tRNA1(Val) + S-adenosyl-L-homocysteine + H(+). Functionally, specifically methylates the adenine in position 37 of tRNA(1)(Val) (anticodon cmo5UAC). In Phocaeicola vulgatus (strain ATCC 8482 / DSM 1447 / JCM 5826 / CCUG 4940 / NBRC 14291 / NCTC 11154) (Bacteroides vulgatus), this protein is tRNA1(Val) (adenine(37)-N6)-methyltransferase.